A 305-amino-acid polypeptide reads, in one-letter code: Calponin-2 (305 aa).

Residue serine 2 is modified to N-acetylserine. 2 positions are modified to N6-acetyllysine: lysine 8 and lysine 25. Positions 28 to 132 constitute a Calponin-homology (CH) domain; the sequence is PQKEAELRSW…SLLALAGKAK (105 aa). The residue at position 138 (serine 138) is a Phosphoserine. Calponin-like repeat units lie at residues 166–191, 206–231, and 245–269; these read IGLQ…RHLY, ISLQ…RHIY, and MSLQ…RQIY.

Belongs to the calponin family. Smooth muscle, and tissues containing significant amounts of smooth muscle.

Functionally, thin filament-associated protein that is implicated in the regulation and modulation of smooth muscle contraction. It is capable of binding to actin, calmodulin and tropomyosin. The interaction of calponin with actin inhibits the actomyosin Mg-ATPase activity. The chain is Calponin-2 (Cnn2) from Mus musculus (Mouse).